We begin with the raw amino-acid sequence, 433 residues long: sn-glycerol-3-phosphate-binding periplasmic protein UgpB (433 aa).

Residues 1–25 (MFTRLITTSVLTGAIALTIGSQAFA) form the signal peptide. Sn-glycerol 3-phosphate is bound by residues Y67, D91, S146, S273, G307, Y346, and R397.

This sequence belongs to the bacterial solute-binding protein 1 family. As to quaternary structure, the complex is composed of two ATP-binding proteins (UgpC), two transmembrane proteins (UgpA and UgpE) and a solute-binding protein (UgpB).

The protein resides in the periplasm. Functionally, part of the ABC transporter complex UgpBAEC involved in sn-glycerol-3-phosphate (G3P) import. Binds G3P. The chain is sn-glycerol-3-phosphate-binding periplasmic protein UgpB (ugpB) from Brucella abortus (strain 2308).